The primary structure comprises 387 residues: Patatin-01 (387 aa).

A signal peptide spans methionine 1–alanine 23. The region spanning leucine 32 to valine 230 is the PNPLA domain. A GXGXXG motif is present at residues glycine 36–glycine 41. Residues glycine 75–glycine 79 carry the GXSXG motif. Residue serine 77 is the Nucleophile of the active site. N-linked (GlcNAc...) asparagine glycosylation occurs at asparagine 115. Aspartate 216 (proton acceptor) is an active-site residue. The DGA/G motif lies at aspartate 216 to alanine 218. The stretch at glutamate 361–alanine 385 forms a coiled coil.

This sequence belongs to the patatin family. Tuber.

Its subcellular location is the vacuole. Its function is as follows. Probable lipolytic acyl hydrolase (LAH), an activity which is thought to be involved in the response of tubers to pathogens. In Solanum tuberosum (Potato), this protein is Patatin-01.